A 160-amino-acid polypeptide reads, in one-letter code: UPF0178 protein PA14_69280 (160 aa).

Belongs to the UPF0178 family.

This Pseudomonas aeruginosa (strain UCBPP-PA14) protein is UPF0178 protein PA14_69280.